A 435-amino-acid polypeptide reads, in one-letter code: Nucleoredoxin (435 aa).

The residue at position 2 (Ser-2) is an N-acetylserine. In terms of domain architecture, Thioredoxin spans 167-321 (PKPFREVIAG…VLELSDSNAA (155 aa)).

Belongs to the nucleoredoxin family. As to quaternary structure, associates with the phosphatase 2A holoenzyme. Interacts with PPP2CA; the interaction is direct. Interacts with DVL1 (via PDZ domain); the interaction is direct and regulated by oxidative stress.

Its subcellular location is the cytoplasm. The protein resides in the cytosol. The protein localises to the nucleus. It catalyses the reaction [protein]-dithiol + NAD(+) = [protein]-disulfide + NADH + H(+). The catalysed reaction is [protein]-dithiol + NADP(+) = [protein]-disulfide + NADPH + H(+). Functions as a redox-dependent negative regulator of the Wnt signaling pathway, possibly by preventing ubiquitination of DVL3 by the BCR(KLHL12) complex. May also function as a transcriptional regulator act as a regulator of protein phosphatase 2A (PP2A). This Homo sapiens (Human) protein is Nucleoredoxin (NXN).